A 214-amino-acid polypeptide reads, in one-letter code: Adenylate kinase (214 aa).

10-15 is a binding site for ATP; the sequence is GAGKGT. The segment at 30–59 is NMP; that stretch reads STGDMLRAAVKAGTPLGVKAQEIMIQGGLV. Residues threonine 31, arginine 36, 57 to 59, 85 to 88, and glutamine 92 each bind AMP; these read GLV and GFPR. Positions 126-163 are LID; it reads GRRSCSSCGKGYHLVFDPPLRAGVCDVCGSGLVQRADD. Residue arginine 127 coordinates ATP. The Zn(2+) site is built by cysteine 130, cysteine 133, cysteine 150, and cysteine 153. AMP is bound by residues arginine 160 and arginine 171. Residue glycine 199 coordinates ATP.

The protein belongs to the adenylate kinase family. As to quaternary structure, monomer.

It is found in the cytoplasm. The enzyme catalyses AMP + ATP = 2 ADP. It participates in purine metabolism; AMP biosynthesis via salvage pathway; AMP from ADP: step 1/1. In terms of biological role, catalyzes the reversible transfer of the terminal phosphate group between ATP and AMP. Plays an important role in cellular energy homeostasis and in adenine nucleotide metabolism. This Trichlorobacter lovleyi (strain ATCC BAA-1151 / DSM 17278 / SZ) (Geobacter lovleyi) protein is Adenylate kinase.